The following is a 614-amino-acid chain: UvrABC system protein C (614 aa).

Residues 19-97 (SLPGCYLWKN…IKKYNPKFNV (79 aa)) form the GIY-YIG domain. Residues 208-243 (ERLVADLKKAMMDASSKMEYERAGFLKQRIEKINQL) enclose the UVR domain.

It belongs to the UvrC family. As to quaternary structure, interacts with UvrB in an incision complex.

It localises to the cytoplasm. Its function is as follows. The UvrABC repair system catalyzes the recognition and processing of DNA lesions. UvrC both incises the 5' and 3' sides of the lesion. The N-terminal half is responsible for the 3' incision and the C-terminal half is responsible for the 5' incision. The polypeptide is UvrABC system protein C (Leptospira biflexa serovar Patoc (strain Patoc 1 / Ames)).